Consider the following 221-residue polypeptide: uncharacterized protein (221 aa).

Residues 1-16 show a composition bias toward basic and acidic residues; it reads MESSRWDKDPPGERRP. Residues 1–64 form a disordered region; sequence MESSRWDKDP…SHTPQTNTRR (64 aa).

This is an uncharacterized protein from Homo sapiens (Human).